The sequence spans 104 residues: Flagellar hook-basal body complex protein FliE (104 aa).

It belongs to the FliE family.

The protein resides in the bacterial flagellum basal body. This chain is Flagellar hook-basal body complex protein FliE, found in Salmonella agona (strain SL483).